Reading from the N-terminus, the 375-residue chain is MSTAGKVIKCKAAVLWEEKKPFSIEEVEVAPPKAHEVRIKMVATGICRSDDHVVSGTLVTPLPVIAGHEAAGIVESIGEGVTTVRPGDKVIPLFTPQCGKCRVCKHPEGNFCLKNDLSMPRGTMQDGTSRFTCRGKPIHHFLGTSTFSQYTVVDEISVAKIDAASPLEKVCLIGCGFSTGYGSAVKVAKVTQGSTCAVFGLGGVGLSVIMGCKAAGAARIIGVDINKDKFAKAKEVGATECVNPQDYKKPIQEVLTEMSNGGVDFSFEVIGRLDTMVTALSCCQEAYGVSVIVGVPPDSQNLSMNPMLLLSGRTWKGAIFGGFKSKDSVPKLVADFMAKKFALDPLITHVLPFEKINEGFDLLRSGESIRTILTF.

An N-acetylserine modification is found at serine 2. Residues cysteine 47, serine 49, histidine 68, cysteine 98, cysteine 101, cysteine 104, cysteine 112, and cysteine 175 each contribute to the Zn(2+) site. The an alcohol site is built by serine 49 and histidine 68. Serine 49 lines the NAD(+) pocket. Residues 200–205 (GLGGVG), aspartate 224, lysine 229, valine 293, 293–295 (VGV), phenylalanine 320, and arginine 370 each bind NAD(+).

Belongs to the zinc-containing alcohol dehydrogenase family. Class-I subfamily. As to quaternary structure, dimer of identical or non-identical chains of two types (E and S) coded by 2 separate genes at different loci. It depends on Zn(2+) as a cofactor.

The protein resides in the cytoplasm. It carries out the reaction a primary alcohol + NAD(+) = an aldehyde + NADH + H(+). The catalysed reaction is a secondary alcohol + NAD(+) = a ketone + NADH + H(+). This is Alcohol dehydrogenase E chain from Equus caballus (Horse).